Here is a 405-residue protein sequence, read N- to C-terminus: DNA polymerase IV 1 (405 aa).

The region spanning 23-203 (IAHIDCDAFY…RPVTTIWGVG (181 aa)) is the UmuC domain. Residues Asp-27 and Asp-120 each coordinate Mg(2+). The active site involves Glu-121.

This sequence belongs to the DNA polymerase type-Y family. In terms of assembly, monomer. Requires Mg(2+) as cofactor.

Its subcellular location is the cytoplasm. The enzyme catalyses DNA(n) + a 2'-deoxyribonucleoside 5'-triphosphate = DNA(n+1) + diphosphate. In terms of biological role, poorly processive, error-prone DNA polymerase involved in untargeted mutagenesis. Copies undamaged DNA at stalled replication forks, which arise in vivo from mismatched or misaligned primer ends. These misaligned primers can be extended by PolIV. Exhibits no 3'-5' exonuclease (proofreading) activity. May be involved in translesional synthesis, in conjunction with the beta clamp from PolIII. This chain is DNA polymerase IV 1 (dinB1), found in Agrobacterium fabrum (strain C58 / ATCC 33970) (Agrobacterium tumefaciens (strain C58)).